The primary structure comprises 476 residues: Serine carboxypeptidase 2 (476 aa).

A signal peptide spans 1-34; the sequence is MRTTTRRLPPAPAAAAVLLAALTCLLLRPAAVAA. Disulfide bonds link Cys97/Cys353, Cys254/Cys266, and Cys290/Cys320. 2 N-linked (GlcNAc...) asparagine glycosylation sites follow: Asn148 and Asn159. The active site involves Ser190. Asn291 is a glycosylation site (N-linked (GlcNAc...) asparagine). Positions 295 to 313 are cleaved as a propeptide — linker peptide; it reads SSSSSSLSRRRTRGRYPWL. Thr314 carries the blocked amino end (Thr) modification. Residues Asn341 and Asn347 are each glycosylated (N-linked (GlcNAc...) asparagine). Asn352 carries N-linked (GlcNAc...) asparagine; partial glycosylation. Asn352 is a glycosylation site (O-linked (GalNAc...) threonine; in variant 351-AT-352). Active-site residues include Asp390 and His443. N-linked (GlcNAc...) asparagine glycosylation is present at Asn472.

It belongs to the peptidase S10 family. As to quaternary structure, carboxypeptidase II is a dimer, where each monomer is composed of two chains linked by a disulfide bond.

It localises to the secreted. The enzyme catalyses Preferential release of a C-terminal arginine or lysine residue.. Functionally, may be involved in the degradation of small peptides (2-5 residues) or in the degradation of storage proteins in the embryo. This is Serine carboxypeptidase 2 (CBP2) from Hordeum vulgare (Barley).